A 65-amino-acid chain; its full sequence is Diapause-specific peptide (65 aa).

An N-terminal signal peptide occupies residues 1-24 (MGAALKMTIFLLIVACAMIATTEA). 3 disulfides stabilise this stretch: C31-C45, C35-C57, and C46-C64.

As to expression, highly expressed in the fat body.

It localises to the secreted. Has antifungal activity against T.rubrum. Blocks voltage-dependent N-type calcium channels (Cav2.2 / CACNA1B). The polypeptide is Diapause-specific peptide (Gastrophysa atrocyanea (Leaf beetle)).